We begin with the raw amino-acid sequence, 248 residues long: Ubiquinone biosynthesis O-methyltransferase (248 aa).

S-adenosyl-L-methionine contacts are provided by Arg40, Gly71, Asp92, and Met135.

Belongs to the methyltransferase superfamily. UbiG/COQ3 family.

The catalysed reaction is a 3-demethylubiquinol + S-adenosyl-L-methionine = a ubiquinol + S-adenosyl-L-homocysteine + H(+). It carries out the reaction a 3-(all-trans-polyprenyl)benzene-1,2-diol + S-adenosyl-L-methionine = a 2-methoxy-6-(all-trans-polyprenyl)phenol + S-adenosyl-L-homocysteine + H(+). It functions in the pathway cofactor biosynthesis; ubiquinone biosynthesis. Functionally, O-methyltransferase that catalyzes the 2 O-methylation steps in the ubiquinone biosynthetic pathway. The protein is Ubiquinone biosynthesis O-methyltransferase of Roseobacter denitrificans (strain ATCC 33942 / OCh 114) (Erythrobacter sp. (strain OCh 114)).